Here is a 417-residue protein sequence, read N- to C-terminus: L-rhamnose isomerase (417 aa).

His260, Asp292, and Asp294 together coordinate Mn(2+).

This sequence belongs to the rhamnose isomerase family. Mn(2+) is required as a cofactor.

The protein localises to the cytoplasm. The enzyme catalyses L-rhamnopyranose = L-rhamnulose. The protein operates within carbohydrate degradation; L-rhamnose degradation; glycerone phosphate from L-rhamnose: step 1/3. Its function is as follows. Catalyzes the interconversion of L-rhamnose and L-rhamnulose. This is L-rhamnose isomerase from Mannheimia succiniciproducens (strain KCTC 0769BP / MBEL55E).